Reading from the N-terminus, the 314-residue chain is L-lactate dehydrogenase 1 (314 aa).

Residues Val-16, Asp-37, Lys-42, Tyr-68, and 82 to 83 contribute to the NAD(+) site; that span reads GL. Substrate is bound by residues Gln-85, Arg-91, and 123–126; that span reads NPVD. NAD(+) is bound by residues 121-123 and Ser-146; that span reads ATN. Residue 151–154 coordinates substrate; sequence DSAR. Residues Arg-156 and His-171 each coordinate beta-D-fructose 1,6-bisphosphate. His-178 serves as the catalytic Proton acceptor. Tyr-223 carries the post-translational modification Phosphotyrosine. Residue Thr-232 coordinates substrate.

It belongs to the LDH/MDH superfamily. LDH family. In terms of assembly, homotetramer.

It is found in the cytoplasm. It carries out the reaction (S)-lactate + NAD(+) = pyruvate + NADH + H(+). It participates in fermentation; pyruvate fermentation to lactate; (S)-lactate from pyruvate: step 1/1. With respect to regulation, allosterically activated by fructose 1,6-bisphosphate (FBP). Functionally, catalyzes the conversion of lactate to pyruvate. The sequence is that of L-lactate dehydrogenase 1 from Bacillus cereus (strain ATCC 14579 / DSM 31 / CCUG 7414 / JCM 2152 / NBRC 15305 / NCIMB 9373 / NCTC 2599 / NRRL B-3711).